The following is a 275-amino-acid chain: Phosphonoacetaldehyde hydrolase (275 aa).

Aspartate 15 functions as the Nucleophile in the catalytic mechanism. Residues aspartate 15 and alanine 17 each coordinate Mg(2+). Lysine 56 functions as the Schiff-base intermediate with substrate in the catalytic mechanism. Position 189 (aspartate 189) interacts with Mg(2+).

Belongs to the HAD-like hydrolase superfamily. PhnX family. In terms of assembly, homodimer. It depends on Mg(2+) as a cofactor.

The catalysed reaction is phosphonoacetaldehyde + H2O = acetaldehyde + phosphate + H(+). Functionally, involved in phosphonate degradation. The sequence is that of Phosphonoacetaldehyde hydrolase from Pseudomonas fluorescens (strain Pf0-1).